The chain runs to 152 residues: Nucleoside diphosphate kinase (152 aa).

ATP-binding residues include K11, F59, R87, T93, R104, and N114. H117 functions as the Pros-phosphohistidine intermediate in the catalytic mechanism.

This sequence belongs to the NDK family. In terms of assembly, homotetramer. Requires Mg(2+) as cofactor.

It localises to the cytoplasm. It carries out the reaction a 2'-deoxyribonucleoside 5'-diphosphate + ATP = a 2'-deoxyribonucleoside 5'-triphosphate + ADP. The catalysed reaction is a ribonucleoside 5'-diphosphate + ATP = a ribonucleoside 5'-triphosphate + ADP. Major role in the synthesis of nucleoside triphosphates other than ATP. The ATP gamma phosphate is transferred to the NDP beta phosphate via a ping-pong mechanism, using a phosphorylated active-site intermediate. This Prochlorococcus marinus (strain MIT 9215) protein is Nucleoside diphosphate kinase.